We begin with the raw amino-acid sequence, 356 residues long: Mannonate dehydratase (356 aa).

It belongs to the mannonate dehydratase family. Fe(2+) is required as a cofactor. It depends on Mn(2+) as a cofactor.

It carries out the reaction D-mannonate = 2-dehydro-3-deoxy-D-gluconate + H2O. It participates in carbohydrate metabolism; pentose and glucuronate interconversion. In terms of biological role, catalyzes the dehydration of D-mannonate. The chain is Mannonate dehydratase from Levilactobacillus brevis (strain ATCC 367 / BCRC 12310 / CIP 105137 / JCM 1170 / LMG 11437 / NCIMB 947 / NCTC 947) (Lactobacillus brevis).